The sequence spans 470 residues: DNA primase large subunit (470 aa).

C279, C358, C376, and C414 together coordinate [4Fe-4S] cluster. Residues 449–470 (EEKKSAKQSNNKENENQSIDEK) are disordered.

The protein belongs to the eukaryotic-type primase large subunit family. In terms of assembly, heterodimer of a small subunit and a large subunit. [4Fe-4S] cluster is required as a cofactor.

Its function is as follows. DNA primase is the polymerase that synthesizes small RNA primers for the Okazaki fragments made during discontinuous DNA replication. This Dictyostelium discoideum (Social amoeba) protein is DNA primase large subunit (prim2).